We begin with the raw amino-acid sequence, 551 residues long: Peptidyl-prolyl cis-trans isomerase-like 4 (551 aa).

The PPIase cyclophilin-type domain maps to 1-185 (MSVLLETSLG…RDIRIRHVVV (185 aa)). The disordered stretch occupies residues 54 to 88 (GDPSNTGKGGASIWSQLPSTSQDSSTSTYFTPESS). The span at 66-88 (IWSQLPSTSQDSSTSTYFTPESS) shows a compositional bias: polar residues. The 79-residue stretch at 262-340 (NILFVCKLNP…RRIWVDFSQS (79 aa)) folds into the RRM domain. The tract at residues 352-551 (RNAGSDAPRA…RQRSRDGSRR (200 aa)) is disordered. Basic and acidic residues-rich tracts occupy residues 384 to 397 (KRGD…RDQP) and 408 to 454 (SRQD…SHRD). Basic residues predominate over residues 455–464 (HERHHLSRHV). A compositionally biased stretch (basic and acidic residues) spans 465–551 (RPSDEGESKC…RQRSRDGSRR (87 aa)).

It belongs to the cyclophilin-type PPIase family. PPIL4 subfamily.

It localises to the nucleus. It catalyses the reaction [protein]-peptidylproline (omega=180) = [protein]-peptidylproline (omega=0). Its function is as follows. PPIases accelerate the folding of proteins. It catalyzes the cis-trans isomerization of proline imidic peptide bonds in oligopeptides. This is Peptidyl-prolyl cis-trans isomerase-like 4 (CYP6) from Mycosarcoma maydis (Corn smut fungus).